A 314-amino-acid polypeptide reads, in one-letter code: GTPase Era (314 aa).

The region spanning 7–188 is the Era-type G domain; it reads RCGFAAVIGS…REFIAGLMPE (182 aa). The segment at 15–22 is G1; sequence GSPNAGKS. 15 to 22 serves as a coordination point for GTP; the sequence is GSPNAGKS. The interval 41-45 is G2; sequence QTTRF. The tract at residues 62 to 65 is G3; the sequence is DTPG. Residues 62–66 and 138–141 each bind GTP; these read DTPGV and NKVD. A G4 region spans residues 138-141; sequence NKVD. Residues 167–169 form a G5 region; the sequence is ISA. The KH type-2 domain maps to 219-296; that stretch reads LHEELPYASM…HLFLNVKVDA (78 aa).

Belongs to the TRAFAC class TrmE-Era-EngA-EngB-Septin-like GTPase superfamily. Era GTPase family. As to quaternary structure, monomer.

It is found in the cytoplasm. The protein resides in the cell inner membrane. An essential GTPase that binds both GDP and GTP, with rapid nucleotide exchange. Plays a role in 16S rRNA processing and 30S ribosomal subunit biogenesis and possibly also in cell cycle regulation and energy metabolism. The sequence is that of GTPase Era from Maricaulis maris (strain MCS10) (Caulobacter maris).